A 344-amino-acid polypeptide reads, in one-letter code: Methionine import ATP-binding protein MetN 1 (344 aa).

Positions 2–241 (IEIRNISQRF…PHHEVTRALI (240 aa)) constitute an ABC transporter domain. 38-45 (GRSGAGKS) lines the ATP pocket.

Belongs to the ABC transporter superfamily. Methionine importer (TC 3.A.1.24) family. The complex is composed of two ATP-binding proteins (MetN), two transmembrane proteins (MetI) and a solute-binding protein (MetQ).

It localises to the cell inner membrane. The catalysed reaction is L-methionine(out) + ATP + H2O = L-methionine(in) + ADP + phosphate + H(+). It carries out the reaction D-methionine(out) + ATP + H2O = D-methionine(in) + ADP + phosphate + H(+). In terms of biological role, part of the ABC transporter complex MetNIQ involved in methionine import. Responsible for energy coupling to the transport system. The protein is Methionine import ATP-binding protein MetN 1 of Paraburkholderia xenovorans (strain LB400).